The chain runs to 216 residues: ATP phosphoribosyltransferase (216 aa).

This sequence belongs to the ATP phosphoribosyltransferase family. Short subfamily. Heteromultimer composed of HisG and HisZ subunits.

Its subcellular location is the cytoplasm. It catalyses the reaction 1-(5-phospho-beta-D-ribosyl)-ATP + diphosphate = 5-phospho-alpha-D-ribose 1-diphosphate + ATP. It participates in amino-acid biosynthesis; L-histidine biosynthesis; L-histidine from 5-phospho-alpha-D-ribose 1-diphosphate: step 1/9. Functionally, catalyzes the condensation of ATP and 5-phosphoribose 1-diphosphate to form N'-(5'-phosphoribosyl)-ATP (PR-ATP). Has a crucial role in the pathway because the rate of histidine biosynthesis seems to be controlled primarily by regulation of HisG enzymatic activity. The chain is ATP phosphoribosyltransferase from Acidovorax ebreus (strain TPSY) (Diaphorobacter sp. (strain TPSY)).